A 102-amino-acid chain; its full sequence is Small ubiquitin-related modifier 1-A (102 aa).

Positions 1–20 (MSDQEAKPSSEDLGDKKDGG) are disordered. The 78-residue stretch at 21-98 (DYIKLKVIGQ…IEVYQEQTGG (78 aa)) folds into the Ubiquitin-like domain. A Glycyl lysine isopeptide (Gly-Lys) (interchain with K-? in acceptor proteins) cross-link involves residue G98. Residues 99–102 (HSTF) constitute a propeptide that is removed on maturation.

It belongs to the ubiquitin family. SUMO subfamily. Interacts with sae2, ube2i, ranbp2, pias1 and pias2. Covalently attached to a number of proteins including rangap1 and ranbp2. Interacts with sox9 and sox10. In terms of processing, cleavage of precursor form by a sentrin-specific protease is necessary for function.

It localises to the nucleus membrane. Its subcellular location is the nucleus speckle. The protein localises to the cytoplasm. The protein resides in the nucleus. It is found in the PML body. It localises to the cell membrane. Ubiquitin-like protein that can be covalently attached to proteins as a monomer or a lysine-linked polymer. Covalent attachment via an isopeptide bond to its substrates requires prior activation by the E1 complex sae1-sae2 and linkage to the E2 enzyme ube2i. This post-translational modification on lysine residues of proteins plays a crucial role in a number of cellular processes such as nuclear transport, DNA replication and repair, mitosis and signal transduction. Polymeric sumo1 chains are also susceptible to polyubiquitination which functions as a signal for proteasomal degradation of modified proteins. The sequence is that of Small ubiquitin-related modifier 1-A (sumo1-a) from Xenopus laevis (African clawed frog).